Reading from the N-terminus, the 72-residue chain is Protein RALF-like 11 (72 aa).

The signal sequence occupies residues 1-17 (MKAWLICLLVICAAVIA). 2 disulfide bridges follow: cysteine 34/cysteine 43 and cysteine 63/cysteine 69.

Belongs to the plant rapid alkalinization factor (RALF) family.

It localises to the secreted. Cell signaling peptide that may regulate plant stress, growth, and development. Mediates a rapid alkalinization of extracellular space by mediating a transient increase in the cytoplasmic Ca(2+) concentration leading to a calcium-dependent signaling events through a cell surface receptor and a concomitant activation of some intracellular mitogen-activated protein kinases. The sequence is that of Protein RALF-like 11 (RALFL11) from Arabidopsis thaliana (Mouse-ear cress).